The sequence spans 1292 residues: HMG domain-containing protein 3 (1292 aa).

A DNA-binding region (HMG box) is located at residues 42-110 (TKKPRSAYLL…GLDPNSKLSA (69 aa)). Disordered stretches follow at residues 363-391 (SKGS…KLTL), 448-505 (VQPE…GRAR), and 562-588 (KQLG…NRTS). Polar residues predominate over residues 370–391 (RNQQPVTTEQNSSKENASKLTL). Over residues 467–478 (PTPSEGTSTSSP) the composition is skewed to low complexity. Over residues 562 to 572 (KQLGQPIQQPS) the composition is skewed to polar residues.

The protein localises to the nucleus. This is HMG domain-containing protein 3 from Homo sapiens (Human).